We begin with the raw amino-acid sequence, 216 residues long: Dimethylamine corrinoid protein 1 (216 aa).

Residues Met1–Lys91 enclose the B12-binding N-terminal domain. A B12-binding domain is found at Leu92–Lys216. His105 is a methylcob(III)alamin binding site.

It belongs to the methylamine corrinoid protein family.

It participates in one-carbon metabolism; methanogenesis from dimethylamine. In terms of biological role, acts as a methyl group carrier between MtbB and MtbA. The polypeptide is Dimethylamine corrinoid protein 1 (mtbC1) (Methanosarcina mazei (strain ATCC BAA-159 / DSM 3647 / Goe1 / Go1 / JCM 11833 / OCM 88) (Methanosarcina frisia)).